Here is a 310-residue protein sequence, read N- to C-terminus: Tyrosine recombinase XerC (310 aa).

Positions 22–103 (SQMLEAIEDF…SVKSFSTWAV (82 aa)) constitute a Core-binding (CB) domain. Residues 124-304 (NLPRVLGEVQ…SSQRLLEAFR (181 aa)) enclose the Tyr recombinase domain. Active-site residues include arginine 165, lysine 189, histidine 256, arginine 259, and histidine 282. The O-(3'-phospho-DNA)-tyrosine intermediate role is filled by tyrosine 291.

This sequence belongs to the 'phage' integrase family. XerC subfamily. As to quaternary structure, forms a cyclic heterotetrameric complex composed of two molecules of XerC and two molecules of XerD.

Its subcellular location is the cytoplasm. In terms of biological role, site-specific tyrosine recombinase, which acts by catalyzing the cutting and rejoining of the recombining DNA molecules. The XerC-XerD complex is essential to convert dimers of the bacterial chromosome into monomers to permit their segregation at cell division. It also contributes to the segregational stability of plasmids. This is Tyrosine recombinase XerC from Corynebacterium efficiens (strain DSM 44549 / YS-314 / AJ 12310 / JCM 11189 / NBRC 100395).